Reading from the N-terminus, the 152-residue chain is Small ribosomal subunit protein uS13 (152 aa).

Belongs to the universal ribosomal protein uS13 family.

The protein localises to the cytoplasm. In terms of biological role, located at the top of the head of the 40S subunit, it contacts several helices of the 18S rRNA. This is Small ribosomal subunit protein uS13 (RPS18) from Branchiostoma belcheri (Amphioxus).